The chain runs to 398 residues: DNA replication and repair protein RecF (398 aa).

30 to 37 (GSNGLGKT) is a binding site for ATP.

It belongs to the RecF family.

The protein resides in the cytoplasm. Its function is as follows. The RecF protein is involved in DNA metabolism; it is required for DNA replication and normal SOS inducibility. RecF binds preferentially to single-stranded, linear DNA. It also seems to bind ATP. This chain is DNA replication and repair protein RecF, found in Renibacterium salmoninarum (strain ATCC 33209 / DSM 20767 / JCM 11484 / NBRC 15589 / NCIMB 2235).